A 266-amino-acid polypeptide reads, in one-letter code: Heat-inducible transcription repressor HrcA (266 aa).

This sequence belongs to the HrcA family.

Negative regulator of class I heat shock genes (grpE-dnaK-dnaJ and groELS operons). Prevents heat-shock induction of these operons. The chain is Heat-inducible transcription repressor HrcA from Helicobacter pylori (strain J99 / ATCC 700824) (Campylobacter pylori J99).